Consider the following 436-residue polypeptide: Probable sodium/metabolite cotransporter BASS4, chloroplastic (436 aa).

The transit peptide at 1-47 directs the protein to the chloroplast; it reads MAIASTLASTQNPFLCLRQPPSPGNRSVVFRRCQDPCGRRWISRSIR. 9 consecutive transmembrane segments (helical) span residues 109-129, 131-151, 157-177, 195-215, 225-245, 257-277, 297-314, 328-348, and 403-423; these read FLPL…TLGC, ADKY…SGLT, IGAA…ILLL, LVTG…GVAL, LALA…PFWV, FPTD…LIIG, LFSK…WIQV, VFLA…AFNA, and PCVA…NLWL.

The protein belongs to the bile acid:sodium symporter (BASS) (TC 2.A.28) family.

It localises to the membrane. Its subcellular location is the plastid. It is found in the chloroplast envelope. Functionally, may function as sodium-coupled metabolite transporter across the chloroplast envelope. The protein is Probable sodium/metabolite cotransporter BASS4, chloroplastic (BASS4) of Arabidopsis thaliana (Mouse-ear cress).